The primary structure comprises 521 residues: 2,3-bisphosphoglycerate-independent phosphoglycerate mutase (521 aa).

Residues Asp-18 and Ser-68 each contribute to the Mn(2+) site. The active-site Phosphoserine intermediate is Ser-68. Substrate is bound by residues His-129, Arg-158–Asp-159, Arg-190, Arg-196, Arg-266–Arg-269, and Lys-343. 5 residues coordinate Mn(2+): Asp-410, His-414, Asp-451, His-452, and His-470.

Belongs to the BPG-independent phosphoglycerate mutase family. Monomer. Requires Mn(2+) as cofactor.

It catalyses the reaction (2R)-2-phosphoglycerate = (2R)-3-phosphoglycerate. The protein operates within carbohydrate degradation; glycolysis; pyruvate from D-glyceraldehyde 3-phosphate: step 3/5. Its function is as follows. Catalyzes the interconversion of 2-phosphoglycerate and 3-phosphoglycerate. The polypeptide is 2,3-bisphosphoglycerate-independent phosphoglycerate mutase (Hydrogenovibrio crunogenus (strain DSM 25203 / XCL-2) (Thiomicrospira crunogena)).